Consider the following 613-residue polypeptide: Portal protein (613 aa).

The tract at residues 577–613 is disordered; sequence ATGGDHGIRQAPSARGDAEPDHAKSKPARDPPPGAGS. Basic and acidic residues predominate over residues 592-605; sequence GDAEPDHAKSKPAR.

The protein belongs to the herpesviridae portal protein family. Homododecamerizes. Interacts with terminase subunits TRM1 and TRM3.

It localises to the virion. The protein resides in the host nucleus. Functionally, forms a portal in the viral capsid through which viral DNA is translocated during DNA packaging. Assembles as a dodecamer at a single fivefold axe of the T=16 icosahedric capsid. Binds to the molecular motor that translocates the viral DNA, termed terminase. The sequence is that of Portal protein from Homo sapiens (Human).